The chain runs to 252 residues: Triosephosphate isomerase (252 aa).

Residue 9–11 (NWK) coordinates substrate. His-96 (electrophile) is an active-site residue. The active-site Proton acceptor is the Glu-166. Substrate is bound by residues Gly-172, Ser-212, and 233–234 (GG).

The protein belongs to the triosephosphate isomerase family. In terms of assembly, homodimer.

It localises to the cytoplasm. The enzyme catalyses D-glyceraldehyde 3-phosphate = dihydroxyacetone phosphate. Its pathway is carbohydrate biosynthesis; gluconeogenesis. It functions in the pathway carbohydrate degradation; glycolysis; D-glyceraldehyde 3-phosphate from glycerone phosphate: step 1/1. Its function is as follows. Involved in the gluconeogenesis. Catalyzes stereospecifically the conversion of dihydroxyacetone phosphate (DHAP) to D-glyceraldehyde-3-phosphate (G3P). The polypeptide is Triosephosphate isomerase (Chlorobium chlorochromatii (strain CaD3)).